Here is a 1960-residue protein sequence, read N- to C-terminus: Myosin-9 (1960 aa).

The residue at position 2 (alanine 2) is an N-acetylalanine. Residues 2–838 (AQQAADKYLY…RLFTKVKPLL (837 aa)) are mediates interaction with LIMCH1. Residue lysine 8 is modified to N6-acetyllysine. Tyrosine 11 carries the phosphotyrosine modification. The region spanning 27-77 (AAKKLVWVPSDKSGFEPASLKEEVGEEAIVELVENGKKVKVNKDDIQKMNP) is the Myosin N-terminal SH3-like domain. The Myosin motor domain maps to 81–776 (SKVEDMAELT…VLAHLEEERD (696 aa)). Lysine 102 carries the post-translational modification N6-acetyllysine. Residue 174 to 181 (GESGAGKT) coordinates ATP. N6-acetyllysine is present on residues lysine 299, lysine 435, and lysine 613. Phosphoserine is present on serine 628. Residues 654–676 (LAKLMATLRNTNPNFVRCIIPNH) form an actin-binding region. The residue at position 754 (tyrosine 754) is a Phosphotyrosine. One can recognise an IQ domain in the interval 779 to 808 (ITDVIIGFQACCRGYLARKAFAKRQQQLTA). Positions 837 to 1926 (LLQVSRQEEE…LKNKLRRGDL (1090 aa)) form a coiled coil. The residue at position 850 (lysine 850) is an N6-succinyllysine. 3 positions are modified to N6-acetyllysine: lysine 860, lysine 975, and lysine 1024. Basic and acidic residues predominate over residues 1035 to 1055 (RLRREEKQRQELEKTRRKLEG). Residues 1035–1057 (RLRREEKQRQELEKTRRKLEGDS) are disordered. Residue serine 1114 is modified to Phosphoserine. Positions 1118-1137 (EDLESERASRNKAEKQKRDL) are disordered. Residues 1122–1137 (SERASRNKAEKQKRDL) are compositionally biased toward basic and acidic residues. Lysine 1234, lysine 1249, lysine 1357, lysine 1392, lysine 1404, lysine 1410, lysine 1459, and lysine 1638 each carry N6-acetyllysine. The residue at position 1669 (lysine 1669) is an N6-succinyllysine. Serine 1714 carries the phosphoserine modification. N6-acetyllysine occurs at positions 1793, 1802, and 1845. Residues 1877-1960 (RQLEEAEEEA…ADGAEAKPAE (84 aa)) form a disordered region. An Omega-N-methylarginine modification is found at arginine 1923. Serine 1943 bears the Phosphoserine mark. The span at 1948-1960 (DGKADGAEAKPAE) shows a compositional bias: basic and acidic residues.

Belongs to the TRAFAC class myosin-kinesin ATPase superfamily. Myosin family. As to quaternary structure, myosin is a hexameric protein that consists of 2 heavy chain subunits (MHC), 2 alkali light chain subunits (MLC) and 2 regulatory light chain subunits (MLC-2). Interacts with RASIP1. Interacts with DDR1. Interacts with PDLIM2. Interacts with SVIL. Interacts with HTRA3. Interacts with Myo7a. Interacts with CFAP95. Interacts with LIMCH1; independently of the integration of MYH9 into the myosin complex. Interacts with RAB3A. Interacts with ZBED4. Interacts with S100A4; this interaction increases cell motility. In terms of assembly, (Microbial infection) Interacts with herpes simplex virus 1/HHV-1 envelope glycoprotein B. ISGylated. In terms of processing, ubiquitination. In the kidney, expressed in the glomeruli. Also expressed in leukocytes.

It is found in the cytoplasm. The protein localises to the cytoskeleton. Its subcellular location is the cell cortex. It localises to the cytoplasmic vesicle. The protein resides in the secretory vesicle. It is found in the cortical granule. The protein localises to the cell membrane. Its function is as follows. Cellular myosin that appears to play a role in cytokinesis, cell shape, and specialized functions such as secretion and capping. Required for cortical actin clearance prior to oocyte exocytosis. Promotes cell motility in conjunction with S100A4. During cell spreading, plays an important role in cytoskeleton reorganization, focal contact formation (in the margins but not the central part of spreading cells), and lamellipodial retraction; this function is mechanically antagonized by MYH10. (Microbial infection) Acts as a receptor for herpes simplex virus 1/HHV-1 envelope glycoprotein B. This chain is Myosin-9 (MYH9), found in Homo sapiens (Human).